The sequence spans 179 residues: NAD(P)H-quinone oxidoreductase subunit I, chloroplastic (179 aa).

4Fe-4S ferredoxin-type domains lie at 55 to 84 and 95 to 124; these read GRIHFEFDKCIACEVCVRVCPIDLPVVDWR and LNYSIDFGVCIFCGNCVEYCPTNCLSMTEE. Residues cysteine 64, cysteine 67, cysteine 70, cysteine 74, cysteine 104, cysteine 107, cysteine 110, and cysteine 114 each contribute to the [4Fe-4S] cluster site.

It belongs to the complex I 23 kDa subunit family. In terms of assembly, NDH is composed of at least 16 different subunits, 5 of which are encoded in the nucleus. The cofactor is [4Fe-4S] cluster.

It is found in the plastid. The protein resides in the chloroplast thylakoid membrane. It carries out the reaction a plastoquinone + NADH + (n+1) H(+)(in) = a plastoquinol + NAD(+) + n H(+)(out). The catalysed reaction is a plastoquinone + NADPH + (n+1) H(+)(in) = a plastoquinol + NADP(+) + n H(+)(out). NDH shuttles electrons from NAD(P)H:plastoquinone, via FMN and iron-sulfur (Fe-S) centers, to quinones in the photosynthetic chain and possibly in a chloroplast respiratory chain. The immediate electron acceptor for the enzyme in this species is believed to be plastoquinone. Couples the redox reaction to proton translocation, and thus conserves the redox energy in a proton gradient. This is NAD(P)H-quinone oxidoreductase subunit I, chloroplastic from Acorus calamus (Sweet flag).